Consider the following 403-residue polypeptide: Probable tRNA sulfurtransferase (403 aa).

Residues 60–165 enclose the THUMP domain; it reads KLAEERLKPI…KEGVFLSCRT (106 aa). Residues 183–184, 208–209, Arg265, Gly287, and Gln296 each bind ATP; these read ML and HF.

This sequence belongs to the ThiI family.

It is found in the cytoplasm. It carries out the reaction [ThiI sulfur-carrier protein]-S-sulfanyl-L-cysteine + a uridine in tRNA + 2 reduced [2Fe-2S]-[ferredoxin] + ATP + H(+) = [ThiI sulfur-carrier protein]-L-cysteine + a 4-thiouridine in tRNA + 2 oxidized [2Fe-2S]-[ferredoxin] + AMP + diphosphate. The catalysed reaction is [ThiS sulfur-carrier protein]-C-terminal Gly-Gly-AMP + S-sulfanyl-L-cysteinyl-[cysteine desulfurase] + AH2 = [ThiS sulfur-carrier protein]-C-terminal-Gly-aminoethanethioate + L-cysteinyl-[cysteine desulfurase] + A + AMP + 2 H(+). Its pathway is cofactor biosynthesis; thiamine diphosphate biosynthesis. Catalyzes the ATP-dependent transfer of a sulfur to tRNA to produce 4-thiouridine in position 8 of tRNAs, which functions as a near-UV photosensor. Also catalyzes the transfer of sulfur to the sulfur carrier protein ThiS, forming ThiS-thiocarboxylate. This is a step in the synthesis of thiazole, in the thiamine biosynthesis pathway. The sulfur is donated as persulfide by IscS. The sequence is that of Probable tRNA sulfurtransferase from Listeria welshimeri serovar 6b (strain ATCC 35897 / DSM 20650 / CCUG 15529 / CIP 8149 / NCTC 11857 / SLCC 5334 / V8).